A 357-amino-acid chain; its full sequence is Probable protein phosphatase 2C 60 (357 aa).

One can recognise a PPM-type phosphatase domain in the interval 23-329; it reads RYGLSSMQGW…DNMTMILVRF (307 aa). Residues aspartate 57, glycine 58, aspartate 272, and aspartate 320 each contribute to the Mn(2+) site. The interval 331–357 is disordered; the sequence is NPTPSETELKPEASQAEGNHDEPSSSN. The segment covering 348–357 has biased composition (basic and acidic residues); sequence GNHDEPSSSN.

The protein belongs to the PP2C family. Requires Mg(2+) as cofactor. It depends on Mn(2+) as a cofactor.

The catalysed reaction is O-phospho-L-seryl-[protein] + H2O = L-seryl-[protein] + phosphate. It catalyses the reaction O-phospho-L-threonyl-[protein] + H2O = L-threonyl-[protein] + phosphate. The polypeptide is Probable protein phosphatase 2C 60 (Arabidopsis thaliana (Mouse-ear cress)).